The following is a 366-amino-acid chain: Sec-independent protein translocase protein TatC (366 aa).

A run of 7 helical transmembrane segments spans residues 42–62, 70–90, 97–117, 134–154, 179–199, 207–227, and 230–250; these read VLAV…LFTM, HMPA…FIPL, AVFI…APGL, ILFY…VFGF, LFFA…LVIV, LAGF…ILTP, and VLSQ…GLFV. Residues 266–279 are compositionally biased toward acidic residues; the sequence is EAEESGAADDESDE. The tract at residues 266-366 is disordered; sequence EAEESGAADD…PSPKKPDSPV (101 aa). Composition is skewed to basic and acidic residues over residues 281–290 and 301–318; these read VSARHAEYEA and DMDK…RLES. Residues 319-333 are compositionally biased toward polar residues; it reads DSSASDDGPESNTAG.

The protein belongs to the TatC family. In terms of assembly, the Tat system comprises two distinct complexes: a TatABC complex, containing multiple copies of TatA, TatB and TatC subunits, and a separate TatA complex, containing only TatA subunits. Substrates initially bind to the TatABC complex, which probably triggers association of the separate TatA complex to form the active translocon.

It is found in the cell inner membrane. In terms of biological role, part of the twin-arginine translocation (Tat) system that transports large folded proteins containing a characteristic twin-arginine motif in their signal peptide across membranes. Together with TatB, TatC is part of a receptor directly interacting with Tat signal peptides. The polypeptide is Sec-independent protein translocase protein TatC (Halothiobacillus neapolitanus (strain ATCC 23641 / c2) (Thiobacillus neapolitanus)).